The primary structure comprises 233 residues: Phosphoglycolate phosphatase (233 aa).

The active-site Nucleophile is aspartate 9. Residues aspartate 9 and aspartate 11 each contribute to the Mg(2+) site. Lysine 154 contributes to the substrate binding site. The Mg(2+) site is built by aspartate 177 and aspartate 181.

This sequence belongs to the archaeal SPP-like hydrolase family. Requires Mg(2+) as cofactor.

It carries out the reaction 2-phosphoglycolate + H2O = glycolate + phosphate. Functionally, catalyzes the dephosphorylation of 2-phosphoglycolate. This Pyrococcus abyssi (strain GE5 / Orsay) protein is Phosphoglycolate phosphatase.